We begin with the raw amino-acid sequence, 89 residues long: UPF0367 protein PMM0124 (89 aa).

Belongs to the UPF0367 family.

The protein is UPF0367 protein PMM0124 of Prochlorococcus marinus subsp. pastoris (strain CCMP1986 / NIES-2087 / MED4).